Here is a 272-residue protein sequence, read N- to C-terminus: MNTIFKISALTLSAALALSACGKKEAAPASASEPAAASSAQGDTSSIGSTMQQASYAMGVDIGRSLKQMKEQGAEIDLKVFTEAMQAVYDGKEIKMTEEQAQEVMMKFLQEQQAKAVEKHKADAKANKEKGEAFLKENAAKDGVKTTASGLQYKITKQGEGKQPTKDDIVTVEYEGRLIDGTVFDSSKANGGPVTFPLSQVIPGWTEGVQLLKEGGEATFYIPSNLAYREQGAGDKIGPNATLVFDVKLVKIGAPENAPAKQPAQVDIKKVN.

A signal peptide spans 1–20 (MNTIFKISALTLSAALALSA). Cys-21 carries N-palmitoyl cysteine lipidation. The S-diacylglycerol cysteine moiety is linked to residue Cys-21. The span at 29–40 (ASASEPAAASSA) shows a compositional bias: low complexity. The tract at residues 29–48 (ASASEPAAASSAQGDTSSIG) is disordered. In terms of domain architecture, PPIase FKBP-type spans 167–253 (DDIVTVEYEG…VFDVKLVKIG (87 aa)).

This sequence belongs to the FKBP-type PPIase family.

The protein resides in the cell membrane. It carries out the reaction [protein]-peptidylproline (omega=180) = [protein]-peptidylproline (omega=0). The sequence is that of Probable FKBP-type peptidyl-prolyl cis-trans isomerase FkpA (fkpA) from Neisseria meningitidis serogroup B (strain ATCC BAA-335 / MC58).